The primary structure comprises 356 residues: Tyrosine recombinase XerS (356 aa).

The 106-residue stretch at 16–121 (VMPPYVLEYY…ALSSLYKYLT (106 aa)) folds into the Core-binding (CB) domain. One can recognise a Tyr recombinase domain in the interval 169 to 354 (GFLDYIDSEY…INEEQKNALD (186 aa)). Active-site residues include R210, K234, H306, R309, and H332. Y341 functions as the O-(3'-phospho-DNA)-tyrosine intermediate in the catalytic mechanism.

It belongs to the 'phage' integrase family. XerS subfamily.

The protein resides in the cytoplasm. Its activity is regulated as follows. FtsK is required for recombination. Functionally, site-specific tyrosine recombinase, which acts by catalyzing the cutting and rejoining of the recombining DNA molecules. Essential to convert dimers of the bacterial chromosome into monomers to permit their segregation at cell division. This chain is Tyrosine recombinase XerS, found in Lactococcus lactis subsp. cremoris (strain SK11).